Here is a 317-residue protein sequence, read N- to C-terminus: Lactamase-like protein adaB (317 aa).

Zn(2+) is bound by residues His-97, His-99, Asp-101, and His-102. The active-site Proton donor/acceptor is the Asp-101.

This sequence belongs to the metallo-beta-lactamase superfamily. Requires Zn(2+) as cofactor.

It catalyses the reaction 3-(2,4-dioxopentyl)-2,3,6,8,9-pentahydroxy-1-oxo-1,2,3,4-tetrahydroanthracene-2-carboxyl-[ACP] = 2-acetyl-3,4a,8,10,11,12a-hexahydroxy-1,4,4a,5,12,12a-hexahydrotetracene-1,12-dione + holo-[ACP] + H(+). It functions in the pathway secondary metabolite biosynthesis. Lactamase-like protein; part of the gene cluster that mediates the biosynthesis of the linear tetracyclic TAN-1612 neuropeptide Y receptor antagonist. The decaketide backbone of TAN-1612 is synthesized by the non-reducing polyketide synthase adaA via condensation of one acetyl-CoA starter unit with 9 malonyl-CoA units. The FAD-dependent monooxygenase adaC then performs hydroxylation at C2 while the polaketide chain is still attached to the NRPKS adaA. The alpha-hydroxylation step at C2 appears to be crucial for the following C18-C1 Claisen cyclization and release of the C9-hydroxyl version of TAN-1612 from the NRPKS adaA, two steps performed by the lactamase-like protein adaB. Finally, the O-methyltransferase adaD performs the C9 O-methylation to complete the biosynthesis of TAN-1612. The polypeptide is Lactamase-like protein adaB (Aspergillus niger (strain ATCC MYA-4892 / CBS 513.88 / FGSC A1513)).